Here is a 253-residue protein sequence, read N- to C-terminus: Triosephosphate isomerase (253 aa).

Substrate is bound at residue 12–14 (NWK). The Electrophile role is filled by H100. The active-site Proton acceptor is the E170. Residues G176, S215, and 236-237 (GG) each bind substrate.

It belongs to the triosephosphate isomerase family. In terms of assembly, homodimer.

The protein localises to the cytoplasm. The enzyme catalyses D-glyceraldehyde 3-phosphate = dihydroxyacetone phosphate. It functions in the pathway carbohydrate biosynthesis; gluconeogenesis. It participates in carbohydrate degradation; glycolysis; D-glyceraldehyde 3-phosphate from glycerone phosphate: step 1/1. In terms of biological role, involved in the gluconeogenesis. Catalyzes stereospecifically the conversion of dihydroxyacetone phosphate (DHAP) to D-glyceraldehyde-3-phosphate (G3P). The sequence is that of Triosephosphate isomerase from Rhodopseudomonas palustris (strain BisA53).